The following is a 140-amino-acid chain: ATP synthase epsilon chain (140 aa).

The protein belongs to the ATPase epsilon chain family. As to quaternary structure, F-type ATPases have 2 components, CF(1) - the catalytic core - and CF(0) - the membrane proton channel. CF(1) has five subunits: alpha(3), beta(3), gamma(1), delta(1), epsilon(1). CF(0) has three main subunits: a, b and c.

It localises to the cell inner membrane. Functionally, produces ATP from ADP in the presence of a proton gradient across the membrane. This is ATP synthase epsilon chain from Thermodesulfovibrio yellowstonii (strain ATCC 51303 / DSM 11347 / YP87).